The chain runs to 90 residues: uncharacterized protein (90 aa).

Residue lysine 88 forms an Isoglutamyl lysine isopeptide (Lys-Gln) (interchain with Q-Cter in protein Pup) linkage.

This is an uncharacterized protein from Mycolicibacterium smegmatis (strain ATCC 700084 / mc(2)155) (Mycobacterium smegmatis).